We begin with the raw amino-acid sequence, 1872 residues long: Histone acetyltransferase KAT6B (1872 aa).

One can recognise an SAMD1-like winged helix (WH) domain in the interval 1-77; that stretch reads MVKLANPLYT…LASYKDPDNP (77 aa). Disordered regions lie at residues 70–103 and 168–207; these read SYKD…CNDL and KEGP…HEKD. An H15 domain is found at 104 to 177; the sequence is RNVDWNKLLK…KEGPQYRVNS (74 aa). Over residues 189-202 the composition is skewed to low complexity; the sequence is PSAFPSSLPPVSLL. PHD-type zinc fingers lie at residues 214–273 and 270–321; these read IPIC…CKTC and CKTC…CRPK. Ser-356 bears the Phosphoserine mark. Positions 361–417 are disordered; the sequence is EGSMSAFTGRGSPGRGQKTKVSTTPSSGHAASGKHSSSRLAVTDPTRPGATTKTTTS. Residues 362 to 535 form a negatively regulates HAT activity region; the sequence is GSMSAFTGRG…ECESGVEDCG (174 aa). Residues 386–395 show a composition bias toward low complexity; that stretch reads SSGHAASGKH. Lys-491 participates in a covalent cross-link: Glycyl lysine isopeptide (Lys-Gly) (interchain with G-Cter in SUMO2). The MYST-type HAT domain occupies 533-807; sequence DCGRYPSVIE…LDPESLRWTP (275 aa). Residues 536–826 are catalytic; it reads RYPSVIEFGK…EEEREAEKEA (291 aa). The C2HC MYST-type zinc finger occupies 566–591; it reads LYLCEFCLKYMKSKNILLRHSKKCGW. Positions 570-826 are interaction with BRPF1; it reads EFCLKYMKSK…EEEREAEKEA (257 aa). Lys-633 bears the N6-acetyllysine; by autocatalysis mark. Residues 674–678 and 683–689 each bind acetyl-CoA; these read SCIMI and QRQGFGR. Glu-709 functions as the Proton donor/acceptor in the catalytic mechanism. Ser-713 is an acetyl-CoA binding site. The span at 846–860 shows a compositional bias: low complexity; the sequence is SRVSSRQSSAKVQSK. Disordered stretches follow at residues 846-1018, 1031-1252, 1283-1358, and 1388-1418; these read SRVS…NHFF, DAEH…FKDA, MSCN…DDTF, and DECQ…SPSV. N6-acetyllysine occurs at positions 856, 860, and 862. Ser-866 bears the Phosphoserine mark. Acidic residues predominate over residues 887–909; the sequence is SEEEEEEEEEDDEEEEEEEEEES. Residues 910–924 show a composition bias toward polar residues; the sequence is IQTSPPRLTKPQSVS. A compositionally biased stretch (basic residues) spans 925–944; sequence IKRKRPFVVKKKRGRKRRRI. Residues 946–959 are compositionally biased toward low complexity; the sequence is SSVTTETISETTEV. Over residues 991–1004 the composition is skewed to basic residues; the sequence is PVLRKAFPHQPGKK. 2 stretches are compositionally biased toward basic and acidic residues: residues 1031–1047 and 1094–1114; these read DAEH…EPLK and EEQK…REVT. The segment covering 1155–1176 has biased composition (acidic residues); that stretch reads EEGEEEGEEEGEREEQEEEEEV. The span at 1177-1207 shows a compositional bias: basic and acidic residues; that stretch reads TTEKDLDGAKSKENPEPEISMEKEDPVHLGD. A compositionally biased stretch (acidic residues) spans 1208-1217; the sequence is HEEDEDEEEE. Composition is skewed to basic and acidic residues over residues 1238–1252 and 1310–1320; these read NMER…FKDA and QTQKQDQKNSD. The segment covering 1339–1349 has biased composition (polar residues); that stretch reads ETAQAVQSLTQ. Residues 1359–1872 form an interaction with RUNX1 and RUNX2 region; the sequence is PDCAETQEAC…QSLNGSYMRR (514 aa). Positions 1393-1410 are enriched in low complexity; it reads SDHSSPVSSVHSHPGQSV.

It belongs to the MYST (SAS/MOZ) family. As to quaternary structure, component of the MOZ/MORF complex composed at least of ING5, KAT6A, KAT6B, MEAF6 and one of BRPF1, BRD1/BRPF2 and BRPF3. Interacts with RUNX1 and RUNX2. Post-translationally, autoacetylation at Lys-633 is required for proper function. As to expression, ubiquitously expressed.

It is found in the nucleus. It catalyses the reaction L-lysyl-[protein] + acetyl-CoA = N(6)-acetyl-L-lysyl-[protein] + CoA + H(+). Its function is as follows. Histone acetyltransferase which may be involved in both positive and negative regulation of transcription. Required for RUNX2-dependent transcriptional activation. Component of the MOZ/MORF complex which has a histone H3 acetyltransferase activity. Involved in cerebral cortex development. This is Histone acetyltransferase KAT6B (Kat6b) from Mus musculus (Mouse).